The chain runs to 771 residues: Dol-P-Glc:Glc(2)Man(9)GlcNAc(2)-PP-Dol alpha-1,2-glucosyltransferase (771 aa).

The next 7 membrane-spanning stretches (helical) occupy residues F45–V65, V160–F180, G182–L202, V221–Y241, V293–L313, H326–G346, and L357–P377. The disordered stretch occupies residues T392 to S449. Composition is skewed to low complexity over residues T411–P426 and S435–S449. N-linked (GlcNAc...) asparagine glycosylation is present at N448. Transmembrane regions (helical) follow at residues P469–I489 and Y503–L525. Over residues Q584–E593 the composition is skewed to basic and acidic residues. Residues Q584–D605 are disordered. Positions V594–E604 are enriched in acidic residues. 2 helical membrane passes run T631 to V651 and F656 to L676. Residues S682 to Q708 are disordered. A helical transmembrane segment spans residues L728–F748.

The protein belongs to the ALG10 glucosyltransferase family.

It is found in the endoplasmic reticulum membrane. The catalysed reaction is an alpha-D-Glc-(1-&gt;3)-alpha-D-Glc-(1-&gt;3)-alpha-D-Man-(1-&gt;2)-alpha-D-Man-(1-&gt;2)-alpha-D-Man-(1-&gt;3)-[alpha-D-Man-(1-&gt;2)-alpha-D-Man-(1-&gt;3)-[alpha-D-Man-(1-&gt;2)-alpha-D-Man-(1-&gt;6)]-alpha-D-Man-(1-&gt;6)]-beta-D-Man-(1-&gt;4)-beta-D-GlcNAc-(1-&gt;4)-alpha-D-GlcNAc-diphospho-di-trans,poly-cis-dolichol + a di-trans,poly-cis-dolichyl beta-D-glucosyl phosphate = a alpha-D-Glc-(1-&gt;2)-alpha-D-Glc-(1-&gt;3)-alpha-D-Glc-(1-&gt;3)-alpha-D-Man-(1-&gt;2)-alpha-D-Man-(1-&gt;2)-alpha-D-Man-(1-&gt;3)-[alpha-D-Man-(1-&gt;2)-alpha-D-Man-(1-&gt;3)-[alpha-D-Man-(1-&gt;2)-alpha-D-Man-(1-&gt;6)]-alpha-D-Man-(1-&gt;6)]-beta-D-Man-(1-&gt;4)-beta-D-GlcNAc-(1-&gt;4)-alpha-D-GlcNAc-diphospho-di-trans,poly-cis-dolichol + a di-trans,poly-cis-dolichyl phosphate + H(+). It participates in protein modification; protein glycosylation. Dol-P-Glc:Glc(2)Man(9)GlcNAc(2)-PP-Dol alpha-1,2-glucosyltransferase that operates in the biosynthetic pathway of dolichol-linked oligosaccharides, the glycan precursors employed in protein asparagine (N)-glycosylation. The assembly of dolichol-linked oligosaccharides begins on the cytosolic side of the endoplasmic reticulum membrane and finishes in its lumen. The sequential addition of sugars to dolichol pyrophosphate produces dolichol-linked oligosaccharides containing fourteen sugars, including two GlcNAcs, nine mannoses and three glucoses. Once assembled, the oligosaccharide is transferred from the lipid to nascent proteins by oligosaccharyltransferases. In the lumen of the endoplasmic reticulum, adds the third and last glucose residue from dolichyl phosphate glucose (Dol-P-Glc) onto the lipid-linked oligosaccharide intermediate Glc(2)Man(9)GlcNAc(2)-PP-Dol to produce Glc(3)Man(9)GlcNAc(2)-PP-Dol. The sequence is that of Dol-P-Glc:Glc(2)Man(9)GlcNAc(2)-PP-Dol alpha-1,2-glucosyltransferase (alg-10) from Neurospora crassa (strain ATCC 24698 / 74-OR23-1A / CBS 708.71 / DSM 1257 / FGSC 987).